A 282-amino-acid polypeptide reads, in one-letter code: Release factor glutamine methyltransferase (282 aa).

Residues 120 to 124 (GVGSG), Asp143, and Asn189 contribute to the S-adenosyl-L-methionine site. 189–192 (NPPY) serves as a coordination point for substrate.

This sequence belongs to the protein N5-glutamine methyltransferase family. PrmC subfamily.

The catalysed reaction is L-glutaminyl-[peptide chain release factor] + S-adenosyl-L-methionine = N(5)-methyl-L-glutaminyl-[peptide chain release factor] + S-adenosyl-L-homocysteine + H(+). Its function is as follows. Methylates the class 1 translation termination release factors RF1/PrfA and RF2/PrfB on the glutamine residue of the universally conserved GGQ motif. In Dictyoglomus turgidum (strain DSM 6724 / Z-1310), this protein is Release factor glutamine methyltransferase.